Here is a 502-residue protein sequence, read N- to C-terminus: 2-isopropylmalate synthase (502 aa).

The Mn(2+) site is built by Asp-1, His-189, His-191, and Asn-225. Residues 1–254 (DGEQALQASL…STNINHKEIY (254 aa)) enclose the Pyruvate carboxyltransferase domain. The regulatory domain stretch occupies residues 379–502 (CLKFFSVQSI…VNKNLKNLKK (124 aa)).

The protein belongs to the alpha-IPM synthase/homocitrate synthase family. LeuA type 1 subfamily. Homodimer. The cofactor is Mn(2+).

It localises to the cytoplasm. The enzyme catalyses 3-methyl-2-oxobutanoate + acetyl-CoA + H2O = (2S)-2-isopropylmalate + CoA + H(+). It participates in amino-acid biosynthesis; L-leucine biosynthesis; L-leucine from 3-methyl-2-oxobutanoate: step 1/4. Functionally, catalyzes the condensation of the acetyl group of acetyl-CoA with 3-methyl-2-oxobutanoate (2-ketoisovalerate) to form 3-carboxy-3-hydroxy-4-methylpentanoate (2-isopropylmalate). This Buchnera aphidicola subsp. Uroleucon sonchi protein is 2-isopropylmalate synthase.